We begin with the raw amino-acid sequence, 210 residues long: NADH dehydrogenase [ubiquinone] iron-sulfur protein 8, mitochondrial (210 aa).

The N-terminal 34 residues, 1–34 (MRCLTTPMLLRALAQAARAGPPGGRSLHSSAVAA), are a transit peptide targeting the mitochondrion. 4Fe-4S ferredoxin-type domains are found at residues 102-131 (RRYPSGEERCIACKLCEAICPAQAITIEAE) and 141-170 (TRYDIDMTKCIYCGFCQEACPVDAIVEGPN). C111, C114, C117, C121, C150, C153, C156, and C160 together coordinate [4Fe-4S] cluster.

The protein belongs to the complex I 23 kDa subunit family. As to quaternary structure, core subunit of respiratory chain NADH dehydrogenase (Complex I) which is composed of 45 different subunits. This is a component of the iron-sulfur (IP) fragment of the enzyme. Interacts with RAB5IF. [4Fe-4S] cluster is required as a cofactor. As to expression, expressed in all tissues with the highest level in heart and skeletal muscle and the lowest level in lung.

Its subcellular location is the mitochondrion inner membrane. The enzyme catalyses a ubiquinone + NADH + 5 H(+)(in) = a ubiquinol + NAD(+) + 4 H(+)(out). Its function is as follows. Core subunit of the mitochondrial membrane respiratory chain NADH dehydrogenase (Complex I) which catalyzes electron transfer from NADH through the respiratory chain, using ubiquinone as an electron acceptor. Essential for the catalytic activity and assembly of complex I. The polypeptide is NADH dehydrogenase [ubiquinone] iron-sulfur protein 8, mitochondrial (NDUFS8) (Homo sapiens (Human)).